The primary structure comprises 697 residues: MMEELHSLDPRRQELLEARFTGVGVAKGSGHNESSNQSLCSVGSLSDKELETPEKKSNDQRTRKRKGDPFDSQGKGGGRGHKISDYFEFAGGSGTGTSPARGIPPVARSSPQHSLSNPPAAVQQGSPSSISSVNTDHSHTSTSHKPASIHTQHRASQSELTMEKLAALESSKSSDLEKKEGRIDDLLRVNCDLRRQIDEQQKMLEWCKERLNKCVTMSKKLLIEKSKQEKIACREKSMQDRLRLGHFTTVRHGASFTEQWTDGYAFQNLVKQQERVNGQREEIERQRKLLIKKKPPSASQTPPPNLEPNKRKSKSNGAENEMLSLAEYHEQEEIFKLRLGHLKKEEAEIQVELERLERVRNLHIRELKRIHNEDNSQFKDHPTLNDRYLLLHLLGRGGFSEVYKAFDLTEQRYVAVKIHQLNKNWRDEKKENYHKHACREYRIHKELDHPRIVKLYDYFSLDTDSFCTVLEYCEGNDLDFYLKQHKLMSEKEARSIIMQVVNALKYLNEIRPPIIHYDLKPGNILLVNGTACGEIKITDFGLSKIMDDDNYGVDGMELTSQGAGTYWYLPPECFVVGKEPPKISNKVDVWSVGVIFYQCLYGKKPFGHNQSQQDILQENTILKATEVQFPPKPGVSPEAKAFIRRCLVYRKEDRIDVHQLASDPYLLPHIRKSVAATGNSSMAVASTSNSSNSSASN.

2 disordered regions span residues 25-159 and 288-316; these read VAKG…SQSE and KLLI…SKSN. Residues 31 to 44 are compositionally biased toward polar residues; it reads HNESSNQSLCSVGS. A compositionally biased stretch (basic and acidic residues) spans 46-61; the sequence is SDKELETPEKKSNDQR. Residues 109 to 145 are compositionally biased toward polar residues; the sequence is SSPQHSLSNPPAAVQQGSPSSISSVNTDHSHTSTSHK. Coiled coils occupy residues 265–294 and 336–373; these read AFQN…IKKK and KLRL…IHNE. Residues 388–666 enclose the Protein kinase domain; that stretch reads YLLLHLLGRG…VHQLASDPYL (279 aa). Residues 394-402 and K417 each bind ATP; that span reads LGRGGFSEV. The active-site Proton acceptor is the D518.

It belongs to the protein kinase superfamily. Ser/Thr protein kinase family. As to quaternary structure, monomer. May form homodimers; homodimerization may enhance autophosphoylation and enzymatic activity. Heterodimer with TLK1. Requires Mg(2+) as cofactor. In terms of processing, phosphorylated. Autophosphorylated; phosphorylation promotes the assembly of higher order oligomers and enzymatic activity.

Its subcellular location is the nucleus. The protein localises to the nucleoplasm. It is found in the cytoplasm. It localises to the perinuclear region. The protein resides in the cytoskeleton. It carries out the reaction L-seryl-[protein] + ATP = O-phospho-L-seryl-[protein] + ADP + H(+). The catalysed reaction is L-threonyl-[protein] + ATP = O-phospho-L-threonyl-[protein] + ADP + H(+). Functionally, serine/threonine-protein kinase involved in the process of chromatin assembly and probably also DNA replication, transcription, repair, and chromosome segregation. Negative regulator of amino acid starvation-induced autophagy. The protein is Serine/threonine-protein kinase tousled-like 2 of Danio rerio (Zebrafish).